A 170-amino-acid chain; its full sequence is F107 fimbrial protein (170 aa).

The first 21 residues, 1 to 21 (MKRLVFISFVALSMTAGSAMA), serve as a signal peptide directing secretion. A disulfide bond links C37 and C78.

It belongs to the fimbrial protein family.

The protein resides in the fimbrium. In terms of biological role, fimbriae (also called pili), polar filaments radiating from the surface of the bacterium to a length of 0.5-1.5 micrometers and numbering 100-300 per cell, enable bacteria to colonize the epithelium of specific host organs. This chain is F107 fimbrial protein (fedA), found in Escherichia coli.